We begin with the raw amino-acid sequence, 256 residues long: Hemin import ATP-binding protein HmuV (256 aa).

Positions 2-239 (IHAFAVSVIR…ANVREVYQVD (238 aa)) constitute an ABC transporter domain. 34-41 (GPNGAGKS) is a binding site for ATP.

The protein belongs to the ABC transporter superfamily. Heme (hemin) importer (TC 3.A.1.14.5) family. As to quaternary structure, the complex is composed of two ATP-binding proteins (HmuV), two transmembrane proteins (HmuU) and a solute-binding protein (HmuT).

The protein localises to the cell inner membrane. Its function is as follows. Part of the ABC transporter complex HmuTUV involved in hemin import. Responsible for energy coupling to the transport system. The sequence is that of Hemin import ATP-binding protein HmuV from Hahella chejuensis (strain KCTC 2396).